Reading from the N-terminus, the 206-residue chain is Small ribosomal subunit protein uS4 (206 aa).

The segment at 28 to 52 is disordered; the sequence is YLDRRPYAPGQHGQRRGRGRPSDYS. An S4 RNA-binding domain is found at 96–171; the sequence is RRLDNVVFRM…QKRRRVSPWI (76 aa).

Belongs to the universal ribosomal protein uS4 family. Part of the 30S ribosomal subunit. Contacts protein S5. The interaction surface between S4 and S5 is involved in control of translational fidelity.

Its function is as follows. One of the primary rRNA binding proteins, it binds directly to 16S rRNA where it nucleates assembly of the body of the 30S subunit. In terms of biological role, with S5 and S12 plays an important role in translational accuracy. This Deinococcus geothermalis (strain DSM 11300 / CIP 105573 / AG-3a) protein is Small ribosomal subunit protein uS4.